A 183-amino-acid chain; its full sequence is MENGAVYSPTTEEDPGPARGPRSGLAAYCFLGRLPLLRRVLKGLQLSLSLLAFICEEVVSQCTLCGGLYFFEFVSCSAFLLSLLILIVYCTPFYERVDTTKVKSSDFYITLGTGCVFLLASIIFVSTHDRTSAEIAAIVFGFIASFMFLLDFVTMLYEKRQESQLRKSENTTRAEALTEPLNA.

At M1 the chain carries N-acetylmethionine. The segment at 1-20 is disordered; the sequence is MENGAVYSPTTEEDPGPARG. Residues 1–39 are Cytoplasmic-facing; it reads MENGAVYSPTTEEDPGPARGPRSGLAAYCFLGRLPLLRR. Position 8 is a phosphoserine (S8). Positions 33-160 constitute an MARVEL domain; it reads RLPLLRRVLK…DFVTMLYEKR (128 aa). Residues 40 to 60 form a helical membrane-spanning segment; the sequence is VLKGLQLSLSLLAFICEEVVS. The Extracellular segment spans residues 61–67; it reads QCTLCGG. A helical transmembrane segment spans residues 68–88; it reads LYFFEFVSCSAFLLSLLILIV. Residues 89–106 are Cytoplasmic-facing; that stretch reads YCTPFYERVDTTKVKSSD. A helical transmembrane segment spans residues 107 to 127; it reads FYITLGTGCVFLLASIIFVST. Over 128-134 the chain is Extracellular; that stretch reads HDRTSAE. The helical transmembrane segment at 135–155 threads the bilayer; it reads IAAIVFGFIASFMFLLDFVTM. Residues 156–183 are Cytoplasmic-facing; it reads LYEKRQESQLRKSENTTRAEALTEPLNA. T171 carries the phosphothreonine modification.

It belongs to the chemokine-like factor family. In terms of assembly, interacts with PD-L1/CD274 (via transmembrane domain); the interaction is direct. Interacts with CMTM4. Interacts with CD58, ARG1, ENO1 and TMPO.

It is found in the cell membrane. Its subcellular location is the early endosome membrane. The protein localises to the recycling endosome membrane. Master regulator of recycling and plasma membrane expression of PD-L1/CD274, an immune inhibitory ligand critical for immune tolerance to self and antitumor immunity. Associates with both constitutive and IFNG-induced PD-L1/CD274 at recycling endosomes, where it protects PD-L1/CD274 from being targeted for lysosomal degradation, likely by preventing its ubiquitination. May stabilize PD-L1/CD274 expression on antigen presenting cells and potentiates inhibitory signaling by PDCD1/CD279, its receptor on T-cells, ultimately triggering T-cell anergy. The sequence is that of CKLF-like MARVEL transmembrane domain-containing protein 6 (CMTM6) from Pongo abelii (Sumatran orangutan).